A 365-amino-acid polypeptide reads, in one-letter code: Heterogeneous nuclear ribonucleoproteins A1 homolog (365 aa).

A globular A domain region spans residues 4-94 (SEAPNEPEQL…EPKRAVSRED (91 aa)). RRM domains follow at residues 14–97 (RKLF…DSSR) and 105–184 (KKIF…LSKQ). A globular B domain region spans residues 95 to 185 (SSRPGAHLTV…QVRKALSKQE (91 aa)). 2 disordered regions span residues 175–208 (SQVRKALSKQEMASVSGSQRERGGSGNYGSRGGF) and 328–365 (GPMKGGNYGGGRNSGPYGGGYGGGSASSSSGYGGGRRF). Gly residues-rich tracts occupy residues 198 to 208 (GSGNYGSRGGF) and 330 to 365 (MKGGNYGGGRNSGPYGGGYGGGSASSSSGYGGGRRF). Positions 321-359 (SQSSSNFGPMKGGNYGGGRNSGPYGGGYGGGSASSSSGY) are nuclear targeting sequence.

The protein resides in the nucleus. It is found in the cytoplasm. Functionally, this protein is a component of ribonucleosomes. This chain is Heterogeneous nuclear ribonucleoproteins A1 homolog (hnrnpa1), found in Xenopus laevis (African clawed frog).